We begin with the raw amino-acid sequence, 135 residues long: Putative pre-16S rRNA nuclease (135 aa).

The protein belongs to the YqgF nuclease family.

It is found in the cytoplasm. Could be a nuclease involved in processing of the 5'-end of pre-16S rRNA. This chain is Putative pre-16S rRNA nuclease, found in Christiangramia forsetii (strain DSM 17595 / CGMCC 1.15422 / KT0803) (Gramella forsetii).